Reading from the N-terminus, the 400-residue chain is Protein phosphatase methylesterase 1 (400 aa).

A disordered region spans residues 1–72; the sequence is MSDLQRTWAK…NQKLFARPQG (72 aa). The span at 19-28 shows a compositional bias: acidic residues; it reads PFDEPQEEQG. Low complexity predominate over residues 44–54; sequence SSASSASSVSS. Over residues 55–64 the composition is skewed to polar residues; that stretch reads TGTIIPSPNQ. Active-site residues include S202, D228, and H358.

This sequence belongs to the AB hydrolase superfamily.

The catalysed reaction is [phosphatase 2A protein]-C-terminal L-leucine methyl ester + H2O = [phosphatase 2A protein]-C-terminal L-leucine + methanol + H(+). Functionally, demethylates proteins that have been reversibly carboxymethylated. Demethylates the phosphatase PP2A catalytic subunit. The sequence is that of Protein phosphatase methylesterase 1 (PPE1) from Gibberella zeae (strain ATCC MYA-4620 / CBS 123657 / FGSC 9075 / NRRL 31084 / PH-1) (Wheat head blight fungus).